Reading from the N-terminus, the 85-residue chain is Large ribosomal subunit protein bL27 (85 aa).

The disordered stretch occupies residues 1-21; the sequence is MAHKKGQGSTQNNRDSAGRRL.

Belongs to the bacterial ribosomal protein bL27 family.

This chain is Large ribosomal subunit protein bL27, found in Nitratiruptor sp. (strain SB155-2).